The chain runs to 91 residues: Small ribosomal subunit protein uS19 (91 aa).

This sequence belongs to the universal ribosomal protein uS19 family.

Protein S19 forms a complex with S13 that binds strongly to the 16S ribosomal RNA. The chain is Small ribosomal subunit protein uS19 from Alcanivorax borkumensis (strain ATCC 700651 / DSM 11573 / NCIMB 13689 / SK2).